The chain runs to 175 residues: uncharacterized protein (175 aa).

This is an uncharacterized protein from Connochaetes taurinus (Blue wildebeest).